The sequence spans 171 residues: ATP synthase subunit b (171 aa).

A helical transmembrane segment spans residues 4–24 (IAFFVICVGFPSLIFASASIQ).

This sequence belongs to the ATPase B chain family. F-type ATPases have 2 components, F(1) - the catalytic core - and F(0) - the membrane proton channel. F(1) has five subunits: alpha(3), beta(3), gamma(1), delta(1), epsilon(1). F(0) has three main subunits: a(1), b(2) and c(10-14). The alpha and beta chains form an alternating ring which encloses part of the gamma chain. F(1) is attached to F(0) by a central stalk formed by the gamma and epsilon chains, while a peripheral stalk is formed by the delta and b chains.

The protein resides in the cell inner membrane. Functionally, f(1)F(0) ATP synthase produces ATP from ADP in the presence of a proton or sodium gradient. F-type ATPases consist of two structural domains, F(1) containing the extramembraneous catalytic core and F(0) containing the membrane proton channel, linked together by a central stalk and a peripheral stalk. During catalysis, ATP synthesis in the catalytic domain of F(1) is coupled via a rotary mechanism of the central stalk subunits to proton translocation. Component of the F(0) channel, it forms part of the peripheral stalk, linking F(1) to F(0). The polypeptide is ATP synthase subunit b (Helicobacter hepaticus (strain ATCC 51449 / 3B1)).